A 219-amino-acid chain; its full sequence is MLTQDQLKLAVAKKALEFVPEDAIIGVGTGSTVNLFIEELAGIKGRIKGAVSSSEASTARLKAHHIQVFDLNEVEKLSVYIDGADEINHHLHMIKGGGAALTREKIVAGVADEFICIADEKKYVTMLGAFPLPIEVIPMARSYVARELVKLGGHPELRQGVTTDNGNVILDVHGLQIMKPVELEETINHIAGVVTCGLFARRRADVLLLGKQDGVEVLR.

Substrate is bound by residues 29–32 (TGST), 82–85 (DGAD), and 95–98 (KGGG). Glu-104 functions as the Proton acceptor in the catalytic mechanism. Lys-122 contacts substrate.

The protein belongs to the ribose 5-phosphate isomerase family. As to quaternary structure, homodimer.

It catalyses the reaction aldehydo-D-ribose 5-phosphate = D-ribulose 5-phosphate. The protein operates within carbohydrate degradation; pentose phosphate pathway; D-ribose 5-phosphate from D-ribulose 5-phosphate (non-oxidative stage): step 1/1. Catalyzes the reversible conversion of ribose-5-phosphate to ribulose 5-phosphate. This is Ribose-5-phosphate isomerase A from Chromobacterium violaceum (strain ATCC 12472 / DSM 30191 / JCM 1249 / CCUG 213 / NBRC 12614 / NCIMB 9131 / NCTC 9757 / MK).